The sequence spans 265 residues: Pyridoxine 5'-phosphate synthase (265 aa).

Residue asparagine 6 participates in 3-amino-2-oxopropyl phosphate binding. Residue 8–9 coordinates 1-deoxy-D-xylulose 5-phosphate; it reads DH. Arginine 17 is a 3-amino-2-oxopropyl phosphate binding site. The Proton acceptor role is filled by histidine 42. 1-deoxy-D-xylulose 5-phosphate is bound by residues arginine 44 and histidine 49. The active-site Proton acceptor is the glutamate 69. A 1-deoxy-D-xylulose 5-phosphate-binding site is contributed by threonine 99. Catalysis depends on histidine 213, which acts as the Proton donor. 3-amino-2-oxopropyl phosphate contacts are provided by residues glycine 214 and 235–236; that span reads GQ.

The protein belongs to the PNP synthase family. Homooctamer; tetramer of dimers.

It localises to the cytoplasm. The enzyme catalyses 3-amino-2-oxopropyl phosphate + 1-deoxy-D-xylulose 5-phosphate = pyridoxine 5'-phosphate + phosphate + 2 H2O + H(+). It participates in cofactor biosynthesis; pyridoxine 5'-phosphate biosynthesis; pyridoxine 5'-phosphate from D-erythrose 4-phosphate: step 5/5. Its function is as follows. Catalyzes the complicated ring closure reaction between the two acyclic compounds 1-deoxy-D-xylulose-5-phosphate (DXP) and 3-amino-2-oxopropyl phosphate (1-amino-acetone-3-phosphate or AAP) to form pyridoxine 5'-phosphate (PNP) and inorganic phosphate. The polypeptide is Pyridoxine 5'-phosphate synthase (Nitratiruptor sp. (strain SB155-2)).